Consider the following 204-residue polypeptide: Recombination protein RecR (204 aa).

The segment at C61–C76 adopts a C4-type zinc-finger fold. One can recognise a Toprim domain in the interval S84–P183.

It belongs to the RecR family.

May play a role in DNA repair. It seems to be involved in an RecBC-independent recombinational process of DNA repair. It may act with RecF and RecO. The chain is Recombination protein RecR from Polynucleobacter asymbioticus (strain DSM 18221 / CIP 109841 / QLW-P1DMWA-1) (Polynucleobacter necessarius subsp. asymbioticus).